A 754-amino-acid chain; its full sequence is Disintegrin and metalloproteinase domain-containing protein 32 (754 aa).

The first 22 residues, 1-22, serve as a signal peptide directing secretion; that stretch reads MLGAMLHTLLLLLLAELGALLA. Phosphoserine is present on serine 23. A propeptide spanning residues 23–176 is cleaved from the precursor; the sequence is SGPESQSSFL…TNYGILINKK (154 aa). Residue asparagine 126 is glycosylated (N-linked (GlcNAc...) asparagine). Topologically, residues 177–689 are extracellular; the sequence is PKSPFKNLFP…ERASKNQEKK (513 aa). Residues 187–384 form the Peptidase M12B domain; the sequence is LYLEMSIVVD…EGAKCLQNKP (198 aa). Cystine bridges form between cysteine 296–cysteine 379, cysteine 338–cysteine 363, cysteine 340–cysteine 345, and cysteine 454–cysteine 475. Asparagine 362, asparagine 469, asparagine 570, and asparagine 571 each carry an N-linked (GlcNAc...) asparagine glycan. In terms of domain architecture, Disintegrin spans 391-483; it reads AAVCGNGKVE…NCPPDVTINN (93 aa). Positions 628–660 constitute an EGF-like domain; the sequence is QSKTCSSKCHGNGVCNSHGVCHCNAGYSPPNCQ. Intrachain disulfides connect cysteine 632–cysteine 642, cysteine 636–cysteine 648, and cysteine 650–cysteine 659. The helical transmembrane segment at 690–710 threads the bilayer; sequence WLLSLYIVLIILASVFLIGTG. The Cytoplasmic segment spans residues 711 to 754; sequence WKGLKQCGSKEEESMSSESKSEDSTYTYVSRSTSETSSMTSTSS. The segment covering 720 to 733 has biased composition (basic and acidic residues); that stretch reads KEEESMSSESKSED. The disordered stretch occupies residues 720–754; sequence KEEESMSSESKSEDSTYTYVSRSTSETSSMTSTSS. Residues 734 to 754 show a composition bias toward low complexity; the sequence is STYTYVSRSTSETSSMTSTSS.

Expressed in sperm (at protein level). Highly expressed in the testis and weakly expressed in the epididymis, brain and heart.

The protein localises to the membrane. Its function is as follows. May play a role in sperm development and fertilization This is a non-catalytic metalloprotease-like protein. This Mus musculus (Mouse) protein is Disintegrin and metalloproteinase domain-containing protein 32.